We begin with the raw amino-acid sequence, 211 residues long: N-(5'-phosphoribosyl)anthranilate isomerase (211 aa).

Belongs to the TrpF family.

It catalyses the reaction N-(5-phospho-beta-D-ribosyl)anthranilate = 1-(2-carboxyphenylamino)-1-deoxy-D-ribulose 5-phosphate. It functions in the pathway amino-acid biosynthesis; L-tryptophan biosynthesis; L-tryptophan from chorismate: step 3/5. The chain is N-(5'-phosphoribosyl)anthranilate isomerase from Zymomonas mobilis subsp. pomaceae (strain ATCC 29192 / DSM 22645 / JCM 10191 / CCUG 17912 / NBRC 13757 / NCIMB 11200 / NRRL B-4491 / Barker I).